The chain runs to 293 residues: Formamidopyrimidine-DNA glycosylase (293 aa).

The active-site Schiff-base intermediate with DNA is the Pro2. Glu3 acts as the Proton donor in catalysis. Lys61 (proton donor; for beta-elimination activity) is an active-site residue. DNA is bound by residues His104, Arg123, and Lys169. The segment at 255-289 (DAYGREGEPCRRCGAIMRRDKFMNRSSFYCPRCQP) adopts an FPG-type zinc-finger fold. The active-site Proton donor; for delta-elimination activity is Arg279.

This sequence belongs to the FPG family. Monomer. It depends on Zn(2+) as a cofactor.

The catalysed reaction is Hydrolysis of DNA containing ring-opened 7-methylguanine residues, releasing 2,6-diamino-4-hydroxy-5-(N-methyl)formamidopyrimidine.. It carries out the reaction 2'-deoxyribonucleotide-(2'-deoxyribose 5'-phosphate)-2'-deoxyribonucleotide-DNA = a 3'-end 2'-deoxyribonucleotide-(2,3-dehydro-2,3-deoxyribose 5'-phosphate)-DNA + a 5'-end 5'-phospho-2'-deoxyribonucleoside-DNA + H(+). Involved in base excision repair of DNA damaged by oxidation or by mutagenic agents. Acts as a DNA glycosylase that recognizes and removes damaged bases. Has a preference for oxidized purines, such as 7,8-dihydro-8-oxoguanine (8-oxoG). Has AP (apurinic/apyrimidinic) lyase activity and introduces nicks in the DNA strand. Cleaves the DNA backbone by beta-delta elimination to generate a single-strand break at the site of the removed base with both 3'- and 5'-phosphates. This Mycolicibacterium vanbaalenii (strain DSM 7251 / JCM 13017 / BCRC 16820 / KCTC 9966 / NRRL B-24157 / PYR-1) (Mycobacterium vanbaalenii) protein is Formamidopyrimidine-DNA glycosylase.